The primary structure comprises 307 residues: uncharacterized protein (307 aa).

Positions 1 to 25 (MKFQKRNIQLVLILLLILNNCFINS) are cleaved as a signal peptide. Residues 60 to 90 (ENNNKNNNNNNNNNNNNNNNNKNSKVKNDDS) are disordered. The segment covering 63 to 82 (NKNNNNNNNNNNNNNNNNKN) has biased composition (low complexity). N-linked (GlcNAc...) asparagine glycans are attached at residues asparagine 124 and asparagine 173. Transmembrane regions (helical) follow at residues 244 to 264 (IIFA…YYLA) and 275 to 295 (IIGV…TIVI).

It localises to the membrane. This is an uncharacterized protein from Dictyostelium discoideum (Social amoeba).